The primary structure comprises 134 residues: Prefoldin subunit 4 (134 aa).

An N-acetylalanine modification is found at A2. Position 125 is a phosphoserine (S125).

It belongs to the prefoldin subunit beta family. In terms of assembly, heterohexamer of two PFD-alpha type and four PFD-beta type subunits. Interacts with URI1; the interaction is phosphorylation-dependent and occurs in a growth-dependent manner.

Its subcellular location is the nucleus. It is found in the cytoplasm. The protein resides in the mitochondrion. In terms of biological role, binds specifically to cytosolic chaperonin (c-CPN) and transfers target proteins to it. Binds to nascent polypeptide chain and promotes folding in an environment in which there are many competing pathways for nonnative proteins. The chain is Prefoldin subunit 4 (PFDN4) from Homo sapiens (Human).